The chain runs to 1856 residues: DNA-directed RNA polymerase II subunit RPB1 (1856 aa).

Residues C66, C69, C76, H79, C106, C109, C149, and C177 each contribute to the Zn(2+) site. The lid loop stretch occupies residues 256–268; the sequence is PAVVTFGSAKNQD. A rudder loop region spans residues 314–331; it reads NCIPGLPTATQKGGRPLK. Mg(2+)-binding residues include D489, D491, and D493. Residues 827 to 839 are bridging helix; it reads PSEFFFHAMGGRE. K1260 participates in a covalent cross-link: Glycyl lysine isopeptide (Lys-Gly) (interchain with G-Cter in ubiquitin). The interval 1523–1856 is disordered; it reads PTTGGMSPGA…PSSPTYDPNS (334 aa). Positions 1587–1856 are enriched in low complexity; that stretch reads SMTSPHYSPT…PSSPTYDPNS (270 aa). 27 tandem repeats follow at residues 1593 to 1599, 1600 to 1606, 1616 to 1622, 1623 to 1629, 1630 to 1636, 1637 to 1643, 1644 to 1650, 1651 to 1657, 1658 to 1664, 1665 to 1671, 1672 to 1678, 1679 to 1685, 1686 to 1692, 1693 to 1699, 1700 to 1706, 1707 to 1713, 1720 to 1726, 1727 to 1733, 1734 to 1740, 1741 to 1747, 1748 to 1754, 1755 to 1761, 1769 to 1775, 1782 to 1788, 1789 to 1795, 1796 to 1802, and 1803 to 1809. Residues 1593–1816 form a C-terminal domain (CTD); 28 X 7 AA approximate tandem repeats of Y-[ST]-P-[ST]-S-P-[AGKNQRST] region; sequence YSPTSPSYSP…SPTYTPSPSE (224 aa). The 28; approximate repeat unit spans residues 1810–1816; that stretch reads YTPSPSE.

This sequence belongs to the RNA polymerase beta' chain family. As to quaternary structure, component of the RNA polymerase II (Pol II) complex consisting of 12 subunits. Interacts with sig-7. Post-translationally, the tandem 7 residues repeats in the C-terminal domain (CTD) can be highly phosphorylated. The phosphorylation activates Pol II. Phosphorylation occurs mainly at residues 'Ser-2' and 'Ser-5' of the heptapeptide repeat and starts at the 3- to 4-cell embryonic stage. This phosphorylation also occurs in the early stages of oocyte development and is not detected in oocytes arrested at the meiotic diakinesis stage. In the somatic lineage, phosphorylation at 'Ser-2' is mediated by cdk-12 downstream of cdk-9 whereas in the germline lineage cdk-12 phosphorylates 'Ser-2' independently of cdk-9. Phosphorylation is likely mediated by cdk-7. May be dephosphorylated by fcp-1 in diakinetic oocytes and in 1-cell and 2-cell embryos. Dephosphorylated at 'Ser-5' of the heptapeptide repeats by ssup-72. The phosphorylation state is believed to result from the balanced action of site-specific CTD kinases and phosphatase, and a 'CTD code' that specifies the position of Pol II within the transcription cycle has been proposed. Following transcription stress, the elongating form of RNA polymerase II (RNA pol IIo) is polyubiquitinated via 'Lys-63'-linkages on Lys-1260 at DNA damage sites without leading to degradation: ubiquitination promotes RNA pol IIo backtracking to allow access by the transcription-coupled nucleotide excision repair (TC-NER) machinery. Subsequent DEF1-dependent polyubiquitination by the elongin complex via 'Lys-48'-linkages may lead to proteasome-mediated degradation; presumably at stalled RNA pol II where TC-NER has failed, to halt global transcription and enable 'last resort' DNA repair pathways.

The protein localises to the nucleus. It is found in the chromosome. The catalysed reaction is RNA(n) + a ribonucleoside 5'-triphosphate = RNA(n+1) + diphosphate. Functionally, DNA-dependent RNA polymerase catalyzes the transcription of DNA into RNA using the four ribonucleoside triphosphates as substrates. Largest and catalytic component of RNA polymerase II which synthesizes mRNA precursors and many functional non-coding RNAs. Forms the polymerase active center together with the second largest subunit. Pol II is the central component of the basal RNA polymerase II transcription machinery. It is composed of mobile elements that move relative to each other. RPB1 is part of the core element with the central large cleft, the clamp element that moves to open and close the cleft and the jaws that are thought to grab the incoming DNA template. At the start of transcription, a single-stranded DNA template strand of the promoter is positioned within the central active site cleft of Pol II. A bridging helix emanates from RPB1 and crosses the cleft near the catalytic site and is thought to promote translocation of Pol II by acting as a ratchet that moves the RNA-DNA hybrid through the active site by switching from straight to bent conformations at each step of nucleotide addition. During transcription elongation, Pol II moves on the template as the transcript elongates. Elongation is influenced by the phosphorylation status of the C-terminal domain (CTD) of Pol II largest subunit (RPB1), which serves as a platform for assembly of factors that regulate transcription initiation, elongation, termination and mRNA processing. Involved in the transcription of several genes including those involved in embryogenesis. The sequence is that of DNA-directed RNA polymerase II subunit RPB1 from Caenorhabditis elegans.